The following is a 313-amino-acid chain: R2-like ligand binding oxidase (313 aa).

E68, E101, and H104 together coordinate Mn(2+). The 3-(O4'-tyrosyl)-valine (Val-Tyr) cross-link spans 71–162 (VTQDIQPFMS…AAQVRASVTY (92 aa)). Position 101 (E101) interacts with Fe cation. 3 residues coordinate Fe cation: E167, E202, and H205.

Belongs to the ribonucleoside diphosphate reductase small chain family. R2-like ligand binding oxidase subfamily. Homodimer. Requires Fe cation as cofactor. It depends on Mn(2+) as a cofactor.

In terms of biological role, probable oxidase that might be involved in lipid metabolism. In Mycobacteroides abscessus (strain ATCC 19977 / DSM 44196 / CCUG 20993 / CIP 104536 / JCM 13569 / NCTC 13031 / TMC 1543 / L948) (Mycobacterium abscessus), this protein is R2-like ligand binding oxidase.